The following is a 316-amino-acid chain: Ornithine carbamoyltransferase (316 aa).

Residues 57-60, Q84, R108, and 135-138 contribute to the carbamoyl phosphate site; these read STRT and HPCQ. L-ornithine contacts are provided by residues N166, D230, and 234–235; that span reads SM. Carbamoyl phosphate-binding positions include 269-270 and R297; that span reads CL.

The protein belongs to the aspartate/ornithine carbamoyltransferase superfamily. OTCase family.

The protein localises to the cytoplasm. The enzyme catalyses carbamoyl phosphate + L-ornithine = L-citrulline + phosphate + H(+). The protein operates within amino-acid biosynthesis; L-arginine biosynthesis; L-arginine from L-ornithine and carbamoyl phosphate: step 1/3. Functionally, reversibly catalyzes the transfer of the carbamoyl group from carbamoyl phosphate (CP) to the N(epsilon) atom of ornithine (ORN) to produce L-citrulline. The polypeptide is Ornithine carbamoyltransferase (argF) (Bacillus cereus (strain ATCC 14579 / DSM 31 / CCUG 7414 / JCM 2152 / NBRC 15305 / NCIMB 9373 / NCTC 2599 / NRRL B-3711)).